Here is a 391-residue protein sequence, read N- to C-terminus: Phosphoglycerate kinase (391 aa).

Residues 21-23, Arg-36, 59-62, Arg-113, and Arg-146 each bind substrate; these read DLN and HLGR. Residues Lys-197, Glu-319, and 345–348 contribute to the ATP site; that span reads GGDT.

Belongs to the phosphoglycerate kinase family. Monomer.

The protein localises to the cytoplasm. It catalyses the reaction (2R)-3-phosphoglycerate + ATP = (2R)-3-phospho-glyceroyl phosphate + ADP. Its pathway is carbohydrate degradation; glycolysis; pyruvate from D-glyceraldehyde 3-phosphate: step 2/5. The sequence is that of Phosphoglycerate kinase from Shewanella piezotolerans (strain WP3 / JCM 13877).